Here is a 348-residue protein sequence, read N- to C-terminus: MTLTKQDAVNQMMGFFQSKTLITALSLKLFDHLRDQDRNAKQMAALLNCPLRSSEQLLIALQAMGYLEKQDGLYHLPQEHRAFLVSDEPQWLGWLGRHIDTFLYPLWGELKAAVENDTHQRQTVFGDDRSWFDILYQNPDDVTDFQEFLGKFAAPFIDGFIQDYDFSQHQAFLDIGSGIGSLPIAVANAYSGVNLAICELPQTSTFLRDKLVQQGYGQRIQVLEGDVISGDLPIGDYDLIHLGWMLHDYAPETQLIILKNIYDAMPVGGRFIASETPLNADKSGPEFTALLSLNMLVSTDGGIESSPQEYLSRFHQAGFSNARIMDISGPRTLIVGEKTTHNNGSSQC.

E199 serves as a coordination point for S-adenosyl-L-methionine. H247 functions as the Proton acceptor in the catalytic mechanism.

Belongs to the class I-like SAM-binding methyltransferase superfamily. Cation-independent O-methyltransferase family.

Its pathway is antibiotic biosynthesis; prodigiosin biosynthesis. In terms of biological role, involved in the biosynthesis of 4-methoxy-2,2'-bipyrrole-5-carbaldehyde (MBC), one of the terminal products involved in the biosynthesis of the red antibiotic prodigiosin (Pig). Catalyzes the transfer of a methyl group from S-adenosyl-L-methionine (SAM) to the hydroxyl group of 4-hydroxy-2,2'-bipyrrole-5-carbaldehyde (HBC) to yield 4-methoxy-2,2'-bipyrrole-5-carbaldehyde (MBC). This is S-adenosyl-L-methionine-dependent methyl transferase PigF from Serratia sp. (strain ATCC 39006) (Prodigiosinella confusarubida).